The sequence spans 312 residues: Molybdenum cofactor biosynthesis bifunctional protein (312 aa).

The interval 1-155 (MEFTHLDENG…GGKSSAAEYH (155 aa)) is molybdenum cofactor biosynthesis protein C. Residues 74-76 (LCH) and 110-111 (ME) contribute to the substrate site. D125 is an active-site residue. The molybdenum cofactor biosynthesis protein B stretch occupies residues 156–312 (PRTAILVMSD…FPMLKGDGHA (157 aa)).

This sequence in the N-terminal section; belongs to the MoaC family. The protein in the C-terminal section; belongs to the MoaB/Mog family.

It catalyses the reaction (8S)-3',8-cyclo-7,8-dihydroguanosine 5'-triphosphate = cyclic pyranopterin phosphate + diphosphate. The protein operates within cofactor biosynthesis; molybdopterin biosynthesis. Catalyzes the conversion of (8S)-3',8-cyclo-7,8-dihydroguanosine 5'-triphosphate to cyclic pyranopterin monophosphate (cPMP). The sequence is that of Molybdenum cofactor biosynthesis bifunctional protein (moaCB) from Chlorobaculum tepidum (strain ATCC 49652 / DSM 12025 / NBRC 103806 / TLS) (Chlorobium tepidum).